Here is a 125-residue protein sequence, read N- to C-terminus: Apolipoprotein C-IV (125 aa).

Positions methionine 1–cysteine 27 are cleaved as a signal peptide.

This sequence belongs to the apolipoprotein C4 family.

Its subcellular location is the secreted. May participate in lipoprotein metabolism. The polypeptide is Apolipoprotein C-IV (APOC4) (Plecturocebus moloch (Dusky titi monkey)).